A 274-amino-acid chain; its full sequence is HTH-type transcriptional regulator GadX (274 aa).

One can recognise an HTH araC/xylS-type domain in the interval 145–242 (TRVCTVINNN…GMTPTEYQER (98 aa)). 2 DNA-binding regions (H-T-H motif) span residues 162–183 (ARIA…REEE) and 209–232 (IKRV…RNYY).

Homodimer.

Positively regulates the expression of about fifteen genes involved in acid resistance such as gadA, gadB and gadC. Depending on the conditions (growth phase and medium), can repress gadW. The sequence is that of HTH-type transcriptional regulator GadX (gadX) from Escherichia coli O157:H7.